Consider the following 128-residue polypeptide: Glycine cleavage system H protein 2 (128 aa).

One can recognise a Lipoyl-binding domain in the interval 24–105; it reads TVTVGISDHA…PYSAWIFKVK (82 aa). Lys-65 carries the N6-lipoyllysine modification.

Belongs to the GcvH family. As to quaternary structure, the glycine cleavage system is composed of four proteins: P, T, L and H. The cofactor is (R)-lipoate.

Its function is as follows. The glycine cleavage system catalyzes the degradation of glycine. The H protein shuttles the methylamine group of glycine from the P protein to the T protein. In Pseudomonas syringae pv. tomato (strain ATCC BAA-871 / DC3000), this protein is Glycine cleavage system H protein 2.